The following is a 527-amino-acid chain: Heat shock factor protein HSF8 (527 aa).

Residues Met1–Val13 are compositionally biased toward low complexity. Disordered stretches follow at residues Met1–Asn37, Arg130–Ser160, Asn243–Gln275, Ser300–Lys343, and Gln476–Gly501. The segment covering Gln25–Asn37 has biased composition (pro residues). The DNA-binding element occupies Pro39–Pro133. Over residues Gly136 to His157 the composition is skewed to low complexity. Polar residues-rich tracts occupy residues Ser319–Arg328 and Asn491–Gly501.

The protein belongs to the HSF family. Homotrimer. In terms of processing, exhibits temperature-dependent phosphorylation.

It localises to the nucleus. In terms of biological role, DNA-binding protein that specifically binds heat shock promoter elements (HSE) and activates transcription. The polypeptide is Heat shock factor protein HSF8 (HSF8) (Solanum peruvianum (Peruvian tomato)).